A 123-amino-acid polypeptide reads, in one-letter code: Guanine nucleotide exchange factor MSS4 (123 aa).

Residue methionine 1 is modified to N-acetylmethionine. Residues 9–123 (ELVSAEGRNR…YVALERVSHE (115 aa)) form the MSS4 domain. Zn(2+) contacts are provided by cysteine 23, cysteine 26, cysteine 94, and cysteine 97.

It belongs to the DSS4/MSS4 family. In terms of assembly, interacts with RAB8A. As to expression, ubiquitous.

Functionally, guanine-nucleotide-releasing protein that acts on members of the SEC4/YPT1/RAB subfamily. Stimulates GDP release from both YPT1, RAB3A and RAB10, but is less active on these proteins than on the SEC4 protein. Might play a general role in vesicular transport. This chain is Guanine nucleotide exchange factor MSS4 (Rabif), found in Rattus norvegicus (Rat).